The primary structure comprises 444 residues: uncharacterized protein (444 aa).

The next 12 membrane-spanning stretches (helical) occupy residues 2–22, 24–44, 52–72, 106–126, 134–154, 174–194, 228–248, 261–281, 305–325, 343–363, 377–397, and 424–444; these read PILI…KVKL, TFVS…MDIN, TGIG…AMLG, FIIG…PIVY, MPFL…HGFL, VLLF…PLFN, FAIS…ATIF, IIEF…LALY, IAMM…LIDG, LFVA…ATVA, AGSV…VIAC, and LLTT…GLVM.

The protein belongs to the GntP permease family.

It localises to the cell membrane. This is an uncharacterized protein from Bacillus subtilis (strain 168).